Here is a 157-residue protein sequence, read N- to C-terminus: E3 ubiquitin-protein ligase RHA1B (157 aa).

The RING-type; atypical zinc-finger motif lies at 85-129; sequence CTVCLSDFVSDDKIRQLPKCGHVFHHRCLDRWIVDCNKITCPICR.

The catalysed reaction is S-ubiquitinyl-[E2 ubiquitin-conjugating enzyme]-L-cysteine + [acceptor protein]-L-lysine = [E2 ubiquitin-conjugating enzyme]-L-cysteine + N(6)-ubiquitinyl-[acceptor protein]-L-lysine.. It participates in protein modification; protein ubiquitination. In terms of biological role, possesses E3 ubiquitin-protein ligase activity when associated with the E2 enzyme UBC8 in vitro. In Arabidopsis thaliana (Mouse-ear cress), this protein is E3 ubiquitin-protein ligase RHA1B.